The following is an 856-amino-acid chain: Serine/threonine-protein kinase unc-51 (856 aa).

A Protein kinase domain is found at 9 to 275; sequence YSKRDLLGHG…FEDFFNHPFL (267 aa). Residues 15–23 and lysine 39 contribute to the ATP site; that span reads LGHGAFAIV. The active-site Proton acceptor is the aspartate 134. The interval 304-327 is disordered; the sequence is PQSSLPVPKRAGSTKLDSPTPVRR. The LIR signature appears at 358-361; that stretch reads FTFL. Disordered stretches follow at residues 362–391, 405–471, and 520–582; these read PPRQ…PVPV, LAAA…ERMT, and PTTT…PTEP. Over residues 365-385 the composition is skewed to polar residues; sequence QESSPVKQVQVHTNVSPSLTT. Positions 411 to 436 are enriched in low complexity; that stretch reads TAVPSSSSPTGSAVSAQHQHQHQQQQ. Composition is skewed to polar residues over residues 527-536 and 566-578; these read IPKSATTANI and KYQQ…SPTA. The tract at residues 750–856 is required for interaction with unc-14 and vab-8; the sequence is YHQCLVRSQE…RQGFVAAVNT (107 aa).

This sequence belongs to the protein kinase superfamily. Ser/Thr protein kinase family. APG1/unc-51/ULK1 subfamily. As to quaternary structure, interacts with unc-14 and vab-8. Interacts (via C-terminus) with atg-13. Interacts (via the LIR motif) with lgg-1; the interaction is direct. Mg(2+) is required as a cofactor.

It carries out the reaction L-seryl-[protein] + ATP = O-phospho-L-seryl-[protein] + ADP + H(+). The enzyme catalyses L-threonyl-[protein] + ATP = O-phospho-L-threonyl-[protein] + ADP + H(+). Functionally, protein kinase important for axonal elongation and axonal guidance. Functions in the CAN axons to direct both anterior and posterior migrations. Phosphorylates both unc-14 and vab-8. Component of the unc-51/atg-13 complex that is probably recruited by lgg-1 to preautophagosomes and is required for autophagosome formation. Interaction with autophagy related proteins such as atg-13 links it to the autophagy machinery to in turn promote P-granule degradation in somatic cells. Plays a role in mitophagy during limited food availability. Regulates cell size. Plays a role in male tail ray pattern formation. May be required for normal dauer morphogenesis. This chain is Serine/threonine-protein kinase unc-51, found in Caenorhabditis elegans.